The primary structure comprises 650 residues: Acetyl-coenzyme A synthetase (650 aa).

Residues 189–192 (RGGK), Thr307, and Asn331 contribute to the CoA site. ATP is bound by residues 383 to 385 (GEP), 407 to 412 (DTWWQT), Asp496, and Arg511. Ser519 lines the CoA pocket. Arg522 provides a ligand contact to ATP. Residues Val533, His535, and Val538 each contribute to the Mg(2+) site. CoA is bound at residue Arg580. N6-acetyllysine is present on Lys605.

Belongs to the ATP-dependent AMP-binding enzyme family. Requires Mg(2+) as cofactor. Post-translationally, acetylated. Deacetylation by the SIR2-homolog deacetylase activates the enzyme.

The enzyme catalyses acetate + ATP + CoA = acetyl-CoA + AMP + diphosphate. Catalyzes the conversion of acetate into acetyl-CoA (AcCoA), an essential intermediate at the junction of anabolic and catabolic pathways. AcsA undergoes a two-step reaction. In the first half reaction, AcsA combines acetate with ATP to form acetyl-adenylate (AcAMP) intermediate. In the second half reaction, it can then transfer the acetyl group from AcAMP to the sulfhydryl group of CoA, forming the product AcCoA. In Syntrophobacter fumaroxidans (strain DSM 10017 / MPOB), this protein is Acetyl-coenzyme A synthetase.